The chain runs to 278 residues: N-terminal Xaa-Pro-Lys N-methyltransferase 2 (278 aa).

Residues G123, R128, D145, 174 to 175 (LQ), Q190, and H195 contribute to the S-adenosyl-L-methionine site.

This sequence belongs to the methyltransferase superfamily. NTM1 family.

It is found in the nucleus. It carries out the reaction N-terminal L-alanyl-L-prolyl-L-lysyl-[protein] + S-adenosyl-L-methionine = N-terminal N-methyl-L-alanyl-L-prolyl-L-lysyl-[protein] + S-adenosyl-L-homocysteine + H(+). The catalysed reaction is N-terminal L-prolyl-L-prolyl-L-lysyl-[protein] + S-adenosyl-L-methionine = N-terminal N-methyl-L-prolyl-L-prolyl-L-lysyl-[protein] + S-adenosyl-L-homocysteine + H(+). The enzyme catalyses N-terminal L-seryl-L-prolyl-L-lysyl-[protein] + S-adenosyl-L-methionine = N-terminal N-methyl-L-seryl-L-prolyl-L-lysyl-[protein] + S-adenosyl-L-homocysteine + H(+). Alpha N-methyltransferase that methylates the N-terminus of target proteins containing the N-terminal motif [Ala/Pro/Ser]-Pro-Lys when the initiator Met is cleaved. Specifically catalyzes monomethylation of exposed alpha-amino group of Ala or Ser residue in the [Ala/Ser]-Pro-Lys motif and Pro in the Pro-Pro-Lys motif. Predominantly functions as a mono-methyltransferase but is also able to di-/tri-methylate the GPKRIA peptide and di-methylate the PPKRIA peptide (in vitro). May activate NTMT1 by priming its substrates for trimethylation. This chain is N-terminal Xaa-Pro-Lys N-methyltransferase 2 (ntmt2), found in Danio rerio (Zebrafish).